The following is an 800-amino-acid chain: Protein PET111, mitochondrial (800 aa).

It to yeast YHR160C.

It localises to the mitochondrion matrix. In terms of biological role, required for translation of the mitochondrial gene for cytochrome c oxidase subunit II (COX2). This is Protein PET111, mitochondrial (PET111) from Saccharomyces cerevisiae (strain ATCC 204508 / S288c) (Baker's yeast).